The sequence spans 153 residues: Ribosome maturation factor RimP (153 aa).

Belongs to the RimP family.

The protein resides in the cytoplasm. In terms of biological role, required for maturation of 30S ribosomal subunits. The protein is Ribosome maturation factor RimP of Marinomonas sp. (strain MWYL1).